We begin with the raw amino-acid sequence, 521 residues long: Probable ATP-dependent RNA helicase Dbp45A (521 aa).

A Q motif motif is present at residues 7–35; that stretch reads NPFQILGLRPWLVKQLTKLGLKGATPIQQ. A Helicase ATP-binding domain is found at 38-209; that stretch reads IPAILAGQDC…IFPIASDCFE (172 aa). 51–58 is a binding site for ATP; the sequence is AKTGSGKT. Positions 157-160 match the DEAD box motif; the sequence is DEAD. The Helicase C-terminal domain occupies 237–386; it reads VLIEALRKYR…EHPIDQRMVE (150 aa). Positions 448 to 521 are disordered; the sequence is KRKLQHAEPA…GRADVKKDKA (74 aa). Basic and acidic residues-rich tracts occupy residues 460–482 and 502–521; these read EEGKALLQDERFKSVDSARFEKK and LNKEKPVAQKGRADVKKDKA.

The protein belongs to the DEAD box helicase family. DDX49/DBP8 subfamily.

The enzyme catalyses ATP + H2O = ADP + phosphate + H(+). Its function is as follows. Probable ATP-binding RNA helicase. The polypeptide is Probable ATP-dependent RNA helicase Dbp45A (Dbp45A) (Drosophila melanogaster (Fruit fly)).